A 119-amino-acid polypeptide reads, in one-letter code: NADH dehydrogenase [ubiquinone] 1 subunit C2 (119 aa).

Residues 56–75 (GLHRQLLYITAFFFAGYYLV) form a helical membrane-spanning segment.

The protein belongs to the complex I NDUFC2 subunit family. Complex I is composed of 45 different subunits. Interacts with TMEM242.

It is found in the mitochondrion inner membrane. Its function is as follows. Accessory subunit of the mitochondrial membrane respiratory chain NADH dehydrogenase (Complex I), that is believed not to be involved in catalysis but required for the complex assembly. Complex I functions in the transfer of electrons from NADH to the respiratory chain. The immediate electron acceptor for the enzyme is believed to be ubiquinone. This chain is NADH dehydrogenase [ubiquinone] 1 subunit C2, found in Pan troglodytes (Chimpanzee).